A 445-amino-acid polypeptide reads, in one-letter code: MSGITLPEFVDCVTVEFSAGRGGNGCASVRREKYKPLAGPDGGSGGHGGSIFLKADTSERTLISFRRKGHYSASNGAHGLSRLRNGARGKDLEVSVPCGTSVYDEGGRQIADLVSPGSCLQVVRGGTGGLGNAALAGYRRKTPRFALLGLPGQKRKLRLEVKSIADVALVGFPSVGKSSIISAISSAKPKIADYPFTTLHPNLGVVQSGPYRYTVADVPGLVEGASKGIGLGLNFLRHIERCSVVVHVIDCANTQQDPISGFNLIEKELSEYKVAENAIPLNKRPKVIVLNKIDVLQTKEEQDTLLYLQSVFKKLVTDVYAISAVTRSGLRQFTLRLGEICQEYPSQVQPTSQTILIPAKNTPEFSLDRTDGVYRVTGKKPEKWILQTDFSSDEAISYLAERLDRLGIEDALVRAGATCGDEVEIGGVIFTWDPSVANTSFSLSV.

In terms of domain architecture, Obg spans 7–164; the sequence is PEFVDCVTVE…RKLRLEVKSI (158 aa). The region spanning 165-342 is the OBG-type G domain; sequence ADVALVGFPS…FTLRLGEICQ (178 aa). GTP is bound by residues 171 to 178, 196 to 200, 217 to 220, 291 to 294, and 323 to 325; these read GFPSVGKS, FTTLH, DVPG, NKID, and SAV. Residues serine 178 and threonine 198 each coordinate Mg(2+). The 78-residue stretch at 357 to 434 folds into the OCT domain; it reads IPAKNTPEFS…IGGVIFTWDP (78 aa).

The protein belongs to the TRAFAC class OBG-HflX-like GTPase superfamily. OBG GTPase family. In terms of assembly, monomer. It depends on Mg(2+) as a cofactor.

It localises to the cytoplasm. Functionally, an essential GTPase which binds GTP, GDP and possibly (p)ppGpp with moderate affinity, with high nucleotide exchange rates and a fairly low GTP hydrolysis rate. Plays a role in control of the cell cycle, stress response, ribosome biogenesis and in those bacteria that undergo differentiation, in morphogenesis control. The protein is GTPase Obg of Tropheryma whipplei (strain Twist) (Whipple's bacillus).